A 336-amino-acid chain; its full sequence is Probable deoxyhypusine synthase (336 aa).

The Nucleophile role is filled by Lys308.

The protein belongs to the deoxyhypusine synthase family. NAD(+) serves as cofactor.

It carries out the reaction [eIF5A protein]-L-lysine + spermidine = [eIF5A protein]-deoxyhypusine + propane-1,3-diamine. It functions in the pathway protein modification; eIF5A hypusination. Functionally, catalyzes the NAD-dependent oxidative cleavage of spermidine and the subsequent transfer of the butylamine moiety of spermidine to the epsilon-amino group of a specific lysine residue of the eIF-5A precursor protein to form the intermediate deoxyhypusine residue. The protein is Probable deoxyhypusine synthase of Pyrococcus furiosus (strain ATCC 43587 / DSM 3638 / JCM 8422 / Vc1).